The sequence spans 419 residues: Chalcone synthase D (419 aa).

The active site involves Cys164.

The protein belongs to the thiolase-like superfamily. Chalcone/stilbene synthases family.

The catalysed reaction is (E)-4-coumaroyl-CoA + 3 malonyl-CoA + 3 H(+) = 2',4,4',6'-tetrahydroxychalcone + 3 CO2 + 4 CoA. It functions in the pathway secondary metabolite biosynthesis; flavonoid biosynthesis. In terms of biological role, the primary product of this enzyme is 4,2',4',6'-tetrahydroxychalcone (also termed naringenin-chalcone or chalcone) which can under specific conditions spontaneously isomerize into naringenin. The polypeptide is Chalcone synthase D (CHSD) (Petunia hybrida (Petunia)).